A 216-amino-acid chain; its full sequence is 3-isopropylmalate dehydratase small subunit (216 aa).

Belongs to the LeuD family. LeuD type 1 subfamily. In terms of assembly, heterodimer of LeuC and LeuD.

The enzyme catalyses (2R,3S)-3-isopropylmalate = (2S)-2-isopropylmalate. The protein operates within amino-acid biosynthesis; L-leucine biosynthesis; L-leucine from 3-methyl-2-oxobutanoate: step 2/4. Catalyzes the isomerization between 2-isopropylmalate and 3-isopropylmalate, via the formation of 2-isopropylmaleate. The sequence is that of 3-isopropylmalate dehydratase small subunit from Psychrobacter arcticus (strain DSM 17307 / VKM B-2377 / 273-4).